A 1009-amino-acid chain; its full sequence is MPALLDKLLRAGEGKILRKLKAIAEQVNSIEDEFAKLSDGELRGLTDEFRARYADGESLDDLLPEAFAAVREAAKRTLGQRHFDVQIMGGAALHFGNIAEMKTGEGKTLVSTLPAYLNALAGRGVHVVTVNDYLARRDAEWMGRIHRFLGLEVGVISPQMGPAERKKAYAADITYGTNNEFGFDYLRDNMAWSVDEIVQRGHFYAIVDEVDSILIDEARTPLIISGPVDMNQKWYTDFAKLAERLQRGENGEGDYEVDEKKRTISITERGVQRVEDWLGIDNLYEPTNTPLVGYLHNALRAKELYKRDRDYVVIDGEVLIVDEFTGRILYGRRYNEGMHQAIEAKEGVPIKQENQTLATITLQNYFRLYEKLAGMTGTAMTEANEFHQIYKLGVVPIPTNRPMIRIDQPDVVFKTEKAKFAAVVEDIAQRHAKGQPVLVGTTSVEKSELLSGMLLRRGIPHAVLNAKYHEKEAAIVAQAGRKGAVTVATNMAGRGTDIMLGGNPEFLARQELAERGLSPVDTPEEYEAAWPEVLEKWKKAVAAEHDEVVQLGGLYVLGTERHDSRRIDNQLRGRSGRQGDPGESRFYLSLEDDLMRLFNGPMVQRIMETLNYPEDVPLESKMVTRAIRSAQTQVEQQNFEIRKNVLKYDEVLNKQRAVIYAERRRVLHGDDLHEQVGHMIDDVIRDYVRAATEEGYAEDWDLEQLWTALRSLYPVGLTIDQVVAECGGDRSGLTAEFLIERLTEDAHRAYAEREAALGTLPDGQPVIRELERRVVLAVLDRKWREHLYEMDYLQEGIQLRSYGQRDPLVEYQREGYTMFQTMLDGIKEESVRLLFSVDVQVTPVAEAPVAATAAADGAGTAAEGTAGVAVPQPAGASGPALQPVPAATAPGQQPVPAAAALSPGAGMRLADSPVAKLLAPPRPTRLQYTAPTIDGAAGSGEATAMTVDERRPSGAAARGPSPASASRQRAGAGEQARPLMYAGTPRSAKCPCGSGKPYKRCHGDPRNAG.

Residues Gln-86, Gly-104–Thr-108, and Asp-497 contribute to the ATP site. 2 disordered regions span residues Ala-869 to Pro-894 and Glu-949 to Gly-1009. Low complexity-rich tracts occupy residues Pro-883 to Pro-894 and Ser-953 to Gly-973. Positions 990, 992, 1001, and 1002 each coordinate Zn(2+).

It belongs to the SecA family. As to quaternary structure, monomer and homodimer. Part of the essential Sec protein translocation apparatus which comprises SecA, SecYEG and auxiliary proteins SecDF. Other proteins may also be involved. Requires Zn(2+) as cofactor.

The protein localises to the cell membrane. The protein resides in the cytoplasm. The catalysed reaction is ATP + H2O + cellular proteinSide 1 = ADP + phosphate + cellular proteinSide 2.. In terms of biological role, part of the Sec protein translocase complex. Interacts with the SecYEG preprotein conducting channel. Has a central role in coupling the hydrolysis of ATP to the transfer of proteins into and across the cell membrane, serving as an ATP-driven molecular motor driving the stepwise translocation of polypeptide chains across the membrane. This Acidothermus cellulolyticus (strain ATCC 43068 / DSM 8971 / 11B) protein is Protein translocase subunit SecA.